A 366-amino-acid chain; its full sequence is Chorismate synthase (366 aa).

Arginine 48 lines the NADP(+) pocket. Residues arginine 125–serine 127, asparagine 241–alanine 242, glycine 285, lysine 300–serine 304, and arginine 326 each bind FMN.

The protein belongs to the chorismate synthase family. As to quaternary structure, homotetramer. The cofactor is FMNH2.

It carries out the reaction 5-O-(1-carboxyvinyl)-3-phosphoshikimate = chorismate + phosphate. Its pathway is metabolic intermediate biosynthesis; chorismate biosynthesis; chorismate from D-erythrose 4-phosphate and phosphoenolpyruvate: step 7/7. Functionally, catalyzes the anti-1,4-elimination of the C-3 phosphate and the C-6 proR hydrogen from 5-enolpyruvylshikimate-3-phosphate (EPSP) to yield chorismate, which is the branch point compound that serves as the starting substrate for the three terminal pathways of aromatic amino acid biosynthesis. This reaction introduces a second double bond into the aromatic ring system. This is Chorismate synthase from Roseobacter denitrificans (strain ATCC 33942 / OCh 114) (Erythrobacter sp. (strain OCh 114)).